The sequence spans 159 residues: 3-dehydroquinate dehydratase (159 aa).

Tyr-31 functions as the Proton acceptor in the catalytic mechanism. Residues Asn-82, His-88, and Asp-95 each contribute to the substrate site. Residue His-109 is the Proton donor of the active site. Substrate is bound by residues 110–111 (IS) and Arg-120.

The protein belongs to the type-II 3-dehydroquinase family. In terms of assembly, homododecamer.

It catalyses the reaction 3-dehydroquinate = 3-dehydroshikimate + H2O. It participates in metabolic intermediate biosynthesis; chorismate biosynthesis; chorismate from D-erythrose 4-phosphate and phosphoenolpyruvate: step 3/7. Catalyzes a trans-dehydration via an enolate intermediate. The chain is 3-dehydroquinate dehydratase from Streptomyces avermitilis (strain ATCC 31267 / DSM 46492 / JCM 5070 / NBRC 14893 / NCIMB 12804 / NRRL 8165 / MA-4680).